Reading from the N-terminus, the 119-residue chain is Large ribosomal subunit protein uL18 (119 aa).

This sequence belongs to the universal ribosomal protein uL18 family. As to quaternary structure, part of the 50S ribosomal subunit; part of the 5S rRNA/L5/L18/L25 subcomplex. Contacts the 5S and 23S rRNAs.

Functionally, this is one of the proteins that bind and probably mediate the attachment of the 5S RNA into the large ribosomal subunit, where it forms part of the central protuberance. The protein is Large ribosomal subunit protein uL18 of Sorangium cellulosum (strain So ce56) (Polyangium cellulosum (strain So ce56)).